The following is a 386-amino-acid chain: Succinate--CoA ligase [ADP-forming] subunit beta (386 aa).

One can recognise an ATP-grasp domain in the interval 9–244 (KALLRAAGIK…TTQEDHRETQ (236 aa)). ATP-binding positions include Lys46, 53–55 (GRG), Glu100, and Arg103. Residues Asn199 and Asp213 each coordinate Mg(2+). Substrate-binding positions include Asn264 and 321 to 323 (GIV).

This sequence belongs to the succinate/malate CoA ligase beta subunit family. In terms of assembly, heterotetramer of two alpha and two beta subunits. It depends on Mg(2+) as a cofactor.

The catalysed reaction is succinate + ATP + CoA = succinyl-CoA + ADP + phosphate. It carries out the reaction GTP + succinate + CoA = succinyl-CoA + GDP + phosphate. It participates in carbohydrate metabolism; tricarboxylic acid cycle; succinate from succinyl-CoA (ligase route): step 1/1. Functionally, succinyl-CoA synthetase functions in the citric acid cycle (TCA), coupling the hydrolysis of succinyl-CoA to the synthesis of either ATP or GTP and thus represents the only step of substrate-level phosphorylation in the TCA. The beta subunit provides nucleotide specificity of the enzyme and binds the substrate succinate, while the binding sites for coenzyme A and phosphate are found in the alpha subunit. This chain is Succinate--CoA ligase [ADP-forming] subunit beta, found in Dichelobacter nodosus (strain VCS1703A).